The chain runs to 175 residues: MASTTSRSARPARRNNKAASTTPLLWMAFALLVVVLDQFFKIVIVRTFTYGESRPVTGFFNLVLVYNKGAAFSFLADAGGWQRWFFTGLGIVVGAFIVWLLYRHTGQRLFCFAVSLILGGAVGNVIDRVVYGHVVDFLDFYVRNYHWPAFNVADCAITVGAVLLIVDELRRVRRH.

4 helical membrane-spanning segments follow: residues 25-45, 56-76, 81-101, and 110-130; these read LWMAFALLVVVLDQFFKIVIV, VTGFFNLVLVYNKGAAFSFLA, WQRWFFTGLGIVVGAFIVWLL, and FCFAVSLILGGAVGNVIDRVV. Active-site residues include Asp136 and Asp154. The helical transmembrane segment at 146–166 threads the bilayer; it reads HWPAFNVADCAITVGAVLLIV.

The protein belongs to the peptidase A8 family.

The protein localises to the cell inner membrane. It catalyses the reaction Release of signal peptides from bacterial membrane prolipoproteins. Hydrolyzes -Xaa-Yaa-Zaa-|-(S,diacylglyceryl)Cys-, in which Xaa is hydrophobic (preferably Leu), and Yaa (Ala or Ser) and Zaa (Gly or Ala) have small, neutral side chains.. It participates in protein modification; lipoprotein biosynthesis (signal peptide cleavage). Its function is as follows. This protein specifically catalyzes the removal of signal peptides from prolipoproteins. The polypeptide is Lipoprotein signal peptidase (Cupriavidus necator (strain ATCC 17699 / DSM 428 / KCTC 22496 / NCIMB 10442 / H16 / Stanier 337) (Ralstonia eutropha)).